Reading from the N-terminus, the 1058-residue chain is Carbamoyl phosphate synthase large chain (1058 aa).

A carboxyphosphate synthetic domain region spans residues 1–401 (MAKRTDIKKI…CLLKACRSLE (401 aa)). Residues Arg129, Arg169, Gly175, Gly176, Arg208, Ile210, Glu215, Gly241, Ile242, His243, Gln284, and Glu298 each coordinate ATP. The ATP-grasp 1 domain maps to 133–327 (KQLMKELGEP…IAKIAAKIAV (195 aa)). Gln284, Glu298, and Asn300 together coordinate Mg(2+). 3 residues coordinate Mn(2+): Gln284, Glu298, and Asn300. Positions 402–546 (IGVDHNELKG…YSTYEWENES (145 aa)) are oligomerization domain. The carbamoyl phosphate synthetic domain stretch occupies residues 547–929 (IKSEKESVIV…ALYKAFEASY (383 aa)). An ATP-grasp 2 domain is found at 671-861 (EKALKDLGIP…MAQVATKLIL (191 aa)). Arg707, Ser746, Ile748, Glu752, Gly777, Val778, His779, Ser780, Gln820, and Glu832 together coordinate ATP. Positions 820, 832, and 834 each coordinate Mg(2+). Mn(2+) is bound by residues Gln820, Glu832, and Asn834. An MGS-like domain is found at 930–1058 (LHMPEYGTIV…ESRTFSIEAI (129 aa)). An allosteric domain region spans residues 930-1058 (LHMPEYGTIV…ESRTFSIEAI (129 aa)).

Belongs to the CarB family. Composed of two chains; the small (or glutamine) chain promotes the hydrolysis of glutamine to ammonia, which is used by the large (or ammonia) chain to synthesize carbamoyl phosphate. Tetramer of heterodimers (alpha,beta)4. Requires Mg(2+) as cofactor. The cofactor is Mn(2+).

The enzyme catalyses hydrogencarbonate + L-glutamine + 2 ATP + H2O = carbamoyl phosphate + L-glutamate + 2 ADP + phosphate + 2 H(+). The catalysed reaction is hydrogencarbonate + NH4(+) + 2 ATP = carbamoyl phosphate + 2 ADP + phosphate + 2 H(+). It functions in the pathway amino-acid biosynthesis; L-arginine biosynthesis; carbamoyl phosphate from bicarbonate: step 1/1. The protein operates within pyrimidine metabolism; UMP biosynthesis via de novo pathway; (S)-dihydroorotate from bicarbonate: step 1/3. Its function is as follows. Large subunit of the glutamine-dependent carbamoyl phosphate synthetase (CPSase). CPSase catalyzes the formation of carbamoyl phosphate from the ammonia moiety of glutamine, carbonate, and phosphate donated by ATP, constituting the first step of 2 biosynthetic pathways, one leading to arginine and/or urea and the other to pyrimidine nucleotides. The large subunit (synthetase) binds the substrates ammonia (free or transferred from glutamine from the small subunit), hydrogencarbonate and ATP and carries out an ATP-coupled ligase reaction, activating hydrogencarbonate by forming carboxy phosphate which reacts with ammonia to form carbamoyl phosphate. In Streptococcus equi subsp. zooepidemicus (strain H70), this protein is Carbamoyl phosphate synthase large chain.